Here is a 339-residue protein sequence, read N- to C-terminus: Putative zinc metalloprotease CA_C1796 (339 aa).

Zn(2+) is bound at residue histidine 20. Glutamate 21 is a catalytic residue. Histidine 24 contributes to the Zn(2+) binding site. A run of 3 helical transmembrane segments spans residues 91-113 (LSIV…CIVG), 275-297 (QLGV…LFLF), and 310-330 (VGFV…VVTI). Residues 99 to 177 (IMNLILAAVL…GIKLALKNNG (79 aa)) form the PDZ domain.

This sequence belongs to the peptidase M50B family. It depends on Zn(2+) as a cofactor.

It localises to the cell membrane. This Clostridium acetobutylicum (strain ATCC 824 / DSM 792 / JCM 1419 / IAM 19013 / LMG 5710 / NBRC 13948 / NRRL B-527 / VKM B-1787 / 2291 / W) protein is Putative zinc metalloprotease CA_C1796.